Here is a 235-residue protein sequence, read N- to C-terminus: MRPDDINPRTGLVVALVSVFLVFGFMFTVSGMKGETLGNIPLLAIGPAICLPGIAAIALARKTEGCTKWPENELLWVRKLPCFRKPKDKEVVELLRTPSDLESGKGSSDELAKKAGLRGKPSLQGQGELPMASSITTPTPMEEGECQSPGQSGRREETSRYLDGYCPSGSSLTYSALDAKCSAWDRSEHPEPEDSIFFVPQDSIIVCSYKQNSPYDRYCCYINQSQGRWDHETIV.

The next 2 helical transmembrane spans lie at 12 to 32 and 40 to 60; these read LVVA…VSGM and IPLL…IALA. The segment at 99–158 is disordered; the sequence is SDLESGKGSSDELAKKAGLRGKPSLQGQGELPMASSITTPTPMEEGECQSPGQSGRREET.

The protein resides in the membrane. The sequence is that of Transmembrane protein 215 (TMEM215) from Bos taurus (Bovine).